A 101-amino-acid polypeptide reads, in one-letter code: Gibberellin-regulated protein 6 (101 aa).

Positions 1–23 (MAKLITSFLLLTILFTFVCLTMS) are cleaved as a signal peptide.

Belongs to the GASA family. Six disulfide bonds may be present.

Its subcellular location is the secreted. Gibberellin-regulated protein that may function in hormonal controlled steps of development such as seed germination, flowering and seed maturation. This is Gibberellin-regulated protein 6 (GASA6) from Arabidopsis thaliana (Mouse-ear cress).